A 351-amino-acid chain; its full sequence is uncharacterized protein (351 aa).

This sequence belongs to the glycosyltransferase group 1 family. Glycosyltransferase 4 subfamily.

This is an uncharacterized protein from Methanocaldococcus jannaschii (strain ATCC 43067 / DSM 2661 / JAL-1 / JCM 10045 / NBRC 100440) (Methanococcus jannaschii).